Consider the following 517-residue polypeptide: MTQANRVIIFDTTLRDGEQSPGAAMTKEEKIRVARQLEKLGVDIIEAGFAAASPGDFEAVNAIAKTITKSTVCSLSRAIERDIRQAGEAVAPAPKKRIHTFIATSPIHMEYKLKMKPKQVIEAAVKAVKIAREYTDDVEFSCEDALRSEIDFLAEICGAVIEAGATTINIPDTVGYSIPYKTEEFFRELIVKTPNGGKVVWSAHCHNDLGLAVANSLAALKGGARQVECTVNGLGERAGNASVEEIVMALKVRHDLFGLETGIDTTQIVPSSKLVSTITGYPVQPNKAIVGANAFSHESGIHQDGVLKHRETYEIMSAESVGWATNRLSLGKLSGRNAFKTKLADLGIELESEEALNAAFARFKELADKKREIFDEDLHALVSDEMGSMNAESYKFISQKISTETGEEPRADIVFSIKGEEKRASATGSGPVDAIFKAIESVAQSGAALQIYSVNAVTQGTESQGETSVRLARGNRVVNGQGADTDVLVATAKAYLSALSKLEFGSAKPKAQGSGTI.

The Pyruvate carboxyltransferase domain occupies 7–269 (VIIFDTTLRD…ETGIDTTQIV (263 aa)). The Mn(2+) site is built by Asp16, His204, His206, and Asn240. The regulatory domain stretch occupies residues 395–517 (KFISQKISTE…KPKAQGSGTI (123 aa)).

The protein belongs to the alpha-IPM synthase/homocitrate synthase family. LeuA type 1 subfamily. Homodimer. Mn(2+) serves as cofactor.

It is found in the cytoplasm. The enzyme catalyses 3-methyl-2-oxobutanoate + acetyl-CoA + H2O = (2S)-2-isopropylmalate + CoA + H(+). Its pathway is amino-acid biosynthesis; L-leucine biosynthesis; L-leucine from 3-methyl-2-oxobutanoate: step 1/4. Functionally, catalyzes the condensation of the acetyl group of acetyl-CoA with 3-methyl-2-oxobutanoate (2-ketoisovalerate) to form 3-carboxy-3-hydroxy-4-methylpentanoate (2-isopropylmalate). The protein is 2-isopropylmalate synthase of Neisseria meningitidis serogroup A / serotype 4A (strain DSM 15465 / Z2491).